The primary structure comprises 224 residues: MPNLDLYNFPMAPASRAIQMVAKALGLELNSKLINTMEGDQLKPEFVRINPQHTIPTLVDNGFVIWESRAIAVYLVEKYGKPDSPLYPNDPQKRALINQRLYFDMGTLYDALTKYFFLIFRTGKFGDQEALDKVNSAFGFLNTFLEGQDFVAGSQLTVADIVILATVSTVEWFSFDLSKFPNVERWLKNAPKVTPGWEQNLESLQQGKKFLQDLQAAKEKEVKA.

Positions 2-83 (PNLDLYNFPM…YLVEKYGKPD (82 aa)) constitute a GST N-terminal domain. Glutathione contacts are provided by residues 53-55 (HTI) and 67-69 (ESR). The GST C-terminal domain occupies 90–210 (DPQKRALINQ…LESLQQGKKF (121 aa)).

Belongs to the GST superfamily. Delta family. In terms of assembly, homodimer.

It carries out the reaction RX + glutathione = an S-substituted glutathione + a halide anion + H(+). In terms of biological role, conjugation of reduced glutathione to a wide number of exogenous and endogenous hydrophobic electrophiles. May be involved in detoxification. In Drosophila melanogaster (Fruit fly), this protein is Glutathione S-transferase D7.